Reading from the N-terminus, the 355-residue chain is Putative cyclin-A3-1 (355 aa).

Belongs to the cyclin family. Cyclin AB subfamily.

This Arabidopsis thaliana (Mouse-ear cress) protein is Putative cyclin-A3-1 (CYCA3-1).